A 98-amino-acid chain; its full sequence is Elicitin Vex1 (98 aa).

Cystine bridges form between Cys3–Cys71, Cys27–Cys56, and Cys51–Cys95. Residue Asn92 is glycosylated (N-linked (GlcNAc...) asparagine).

The protein belongs to the elicitin family.

It localises to the secreted. Induces local and distal defense responses (incompatible hypersensitive reaction) in plants from the solanaceae and cruciferae families. Elicits leaf necrosis and causes the accumulation of pathogenesis-related proteins. Might interact with the lipidic molecules of the plasma membrane. This Phytopythium vexans (Damping-off fungus) protein is Elicitin Vex1.